Here is a 399-residue protein sequence, read N- to C-terminus: P2X purinoceptor 1 (399 aa).

The Cytoplasmic portion of the chain corresponds to 1 to 28 (MARRLQDELSAFFFEYDTPRMVLVRNKK). Residues 29–50 (VGVIFRLIQLVVLVYVIGWVFV) traverse the membrane as a helical segment. At 51–338 (YEKGYQTSSG…IPTMTTIGSG (288 aa)) the chain is on the extracellular side. 3 residues coordinate CTP: Lys-68, Lys-70, and Lys-140. Lys-70 lines the ATP pocket. 3 disulfide bridges follow: Cys-117–Cys-165, Cys-126–Cys-149, and Cys-132–Cys-159. Residues Asn-153 and Asn-184 are each glycosylated (N-linked (GlcNAc...) asparagine). CTP is bound at residue Thr-186. ATP is bound at residue Thr-186. An N-linked (GlcNAc...) asparagine glycan is attached at Asn-210. 2 cysteine pairs are disulfide-bonded: Cys-217–Cys-227 and Cys-261–Cys-270. The ATP site is built by Ser-286, Asn-290, and Arg-292. Residues Asn-290 and Arg-292 each contribute to the CTP site. N-linked (GlcNAc...) asparagine glycosylation occurs at Asn-300. Residue Lys-309 participates in CTP binding. Lys-309 lines the ATP pocket. A pore-forming motif region spans residues 331 to 338 (TMTTIGSG). Residues 339-358 (IGIFGVATVLCDLLLLHILP) traverse the membrane as a helical segment. The Cytoplasmic segment spans residues 359–399 (KRHYYKQKKFKYAEDMGPGEGERDPAATSSTLGLQENMRTS). Positions 374–399 (MGPGEGERDPAATSSTLGLQENMRTS) are disordered. Residues 385–399 (ATSSTLGLQENMRTS) are compositionally biased toward polar residues. Ser-387 and Ser-388 each carry phosphoserine. Thr-389 carries the phosphothreonine modification.

The protein belongs to the P2X receptor family. As to quaternary structure, functional P2XRs are organized as homomeric and heteromeric trimers. Forms heterodimer with P2RX2. Forms heterodimer with P2RX4. Forms heterodimer with P2RX5. In terms of tissue distribution, expressed in smooth muscle of the bladder and arteries.

The protein localises to the cell membrane. The catalysed reaction is Ca(2+)(in) = Ca(2+)(out). It carries out the reaction K(+)(in) = K(+)(out). The enzyme catalyses Na(+)(in) = Na(+)(out). Its activity is regulated as follows. Activated by low concentrations of ATP (&lt;1 uM). Undergoes rapid desensitisation. Sensitives to the ATP agonist:alpha/beta-methylene-ATP. Modulated by cholesterol. ATP-gated nonselective transmembrane cation channel permeable to potassium, sodium and with relatively high calcium permeability. Furthermore, CTP functions as a weak affinity agonist for P2RX1. Plays a role in male fertility, bladder contraction and platelet aggregation. Specifically, plays an important role in neurogenic contraction of smooth muscle of the vas deferens, and therefore is essential for normal male reproductive function. In addition, contributes to smooth muscle contractions of the urinary bladder. On platelets, contributes to platelet activation and aggregation and thereby, also to thrombosis. On neutrophils, it is involved in chemotaxis and in mitigating the activation of circulating cells. This is P2X purinoceptor 1 (P2rx1) from Mus musculus (Mouse).